A 91-amino-acid chain; its full sequence is Chorion class B protein M3A5 (91 aa).

The segment at 1-51 (VASENRYEGTVGVSGNLPFLGTADVAGEFPTAGIGEILYGCGNGAVGITRE) is central domain. Positions 52–91 (GGLGYGAGYGGGYGLGYGGYGGGYGLGYGGYGGCGCGCGY) are right arm (Gly-rich tandem repeats).

The protein belongs to the chorion protein family.

In terms of biological role, this protein is one of many from the eggshell of the silk moth. The sequence is that of Chorion class B protein M3A5 from Bombyx mori (Silk moth).